A 248-amino-acid chain; its full sequence is 3-oxoacyl-[acyl-carrier-protein] reductase FabG (248 aa).

Residues Gly-14 to Arg-17, Asp-65 to Val-66, and Asn-92 each bind NADP(+). Ser-144 is a substrate binding site. Tyr-157 functions as the Proton acceptor in the catalytic mechanism. Residues Tyr-157–Lys-161 and Ile-190 each bind NADP(+).

This sequence belongs to the short-chain dehydrogenases/reductases (SDR) family. In terms of assembly, homotetramer.

It catalyses the reaction a (3R)-hydroxyacyl-[ACP] + NADP(+) = a 3-oxoacyl-[ACP] + NADPH + H(+). Its pathway is lipid metabolism; fatty acid biosynthesis. Functionally, catalyzes the NADPH-dependent reduction of beta-ketoacyl-ACP substrates to beta-hydroxyacyl-ACP products, the first reductive step in the elongation cycle of fatty acid biosynthesis. The protein is 3-oxoacyl-[acyl-carrier-protein] reductase FabG (fabG) of Chlamydia muridarum (strain MoPn / Nigg).